A 241-amino-acid polypeptide reads, in one-letter code: Ribonuclease PH (241 aa).

Residues Arg89 and 127–129 each bind phosphate; that span reads GTR.

This sequence belongs to the RNase PH family. As to quaternary structure, homohexameric ring arranged as a trimer of dimers.

It catalyses the reaction tRNA(n+1) + phosphate = tRNA(n) + a ribonucleoside 5'-diphosphate. In terms of biological role, phosphorolytic 3'-5' exoribonuclease that plays an important role in tRNA 3'-end maturation. Removes nucleotide residues following the 3'-CCA terminus of tRNAs; can also add nucleotides to the ends of RNA molecules by using nucleoside diphosphates as substrates, but this may not be physiologically important. Probably plays a role in initiation of 16S rRNA degradation (leading to ribosome degradation) during starvation. The polypeptide is Ribonuclease PH (Xylella fastidiosa (strain 9a5c)).